We begin with the raw amino-acid sequence, 76 residues long: Exodeoxyribonuclease 7 small subunit (76 aa).

This sequence belongs to the XseB family. As to quaternary structure, heterooligomer composed of large and small subunits.

It is found in the cytoplasm. It catalyses the reaction Exonucleolytic cleavage in either 5'- to 3'- or 3'- to 5'-direction to yield nucleoside 5'-phosphates.. Its function is as follows. Bidirectionally degrades single-stranded DNA into large acid-insoluble oligonucleotides, which are then degraded further into small acid-soluble oligonucleotides. In Legionella pneumophila (strain Paris), this protein is Exodeoxyribonuclease 7 small subunit.